A 257-amino-acid chain; its full sequence is Low affinity immunoglobulin gamma Fc region receptor III-A (257 aa).

Positions 1–19 (MWQLLSPTALLLLVSVPGT) are cleaved as a signal peptide. Residues 20 to 209 (HAEDPPKSVV…ILSFFLPWHQ (190 aa)) are Extracellular-facing. 2 Ig-like C2-type domains span residues 25–104 (PKSV…LRLE) and 108–190 (GWLL…VKVT). 2 disulfide bridges follow: C48–C90 and C129–C173. Residues N64, N134, and N162 are each glycosylated (N-linked (GlcNAc...) asparagine). An N-linked (GlcNAc...) asparagine; in variant N-181 glycan is attached at D181. Residues 210–230 (IIFCLVMGFLFAVDTGLYFSV) traverse the membrane as a helical segment. Residues 231 to 257 (RKVLRSSKEDWRNGKVTWSRDPADKGG) lie on the Cytoplasmic side of the membrane.

Forms a heterooligomeric complex with ITAM-containing signaling subunits FCER1G. Interacts (via transmembrane domain) with signaling subunits; this interaction is a prerequisite for receptor complex expression on the cell surface and intracellular signal transduction. Binds the Fc region of antigen-complexed IgG. Expressed in polymorphonuclear leukocytes, pulmonary alveolar macrophages and peripheral blood mononuclear cells (at protein level). Found in spleen, and at very low levels in lymph nodes but not in thymus or liver.

The protein localises to the cell membrane. Its function is as follows. Receptor for the invariable Fc fragment of immunoglobulin gamma (IgG). Optimally activated upon binding of clustered antigen-IgG complexes displayed on cell surfaces, triggers lysis of antibody-coated cells, a process known as antibody-dependent cellular cytotoxicity (ADCC). Does not bind free monomeric IgG, thus avoiding inappropriate effector cell activation in the absence of antigenic trigger. Mediates IgG effector functions on natural killer (NK) cells. Binds antigen-IgG complexes generated upon infection and triggers NK cell-dependent cytokine production and degranulation to limit viral load and propagation. Fc-binding subunit that associates with FCER1G adapter to form functional signaling complexes. Following the engagement of antigen-IgG complexes, triggers phosphorylation of immunoreceptor tyrosine-based activation motif (ITAM)-containing adapter with subsequent activation of phosphatidylinositol 3-kinase signaling and sustained elevation of intracellular calcium that ultimately drive NK cell activation. Mediates enhanced ADCC in response to afucosylated IgGs. This is Low affinity immunoglobulin gamma Fc region receptor III-A from Sus scrofa (Pig).